A 77-amino-acid chain; its full sequence is Defensin-like protein 4 (77 aa).

An N-terminal signal peptide occupies residues 1–30 (MKFSMRLISAVLFLVMIFVATGMGPVTVEA). 4 disulfide bridges follow: C33–C77, C44–C64, C50–C71, and C54–C73.

This sequence belongs to the DEFL family. In terms of tissue distribution, expressed in roots, siliques and seeds.

The protein localises to the secreted. Its function is as follows. Confers broad-spectrum resistance to pathogens. The protein is Defensin-like protein 4 (PDF2.1) of Arabidopsis thaliana (Mouse-ear cress).